A 434-amino-acid chain; its full sequence is Alpha-enolase (434 aa).

Residue Ser40 participates in Mg(2+) binding. Residues His158 and Glu167 each contribute to the substrate site. Catalysis depends on Glu210, which acts as the Proton donor. Residues Asp245, Glu293, and Asp318 each coordinate Mg(2+). Positions 293 and 318 each coordinate substrate. Lys343 functions as the Proton acceptor in the catalytic mechanism. Substrate contacts are provided by residues 370-373 and Lys394; that span reads SHRS.

The protein belongs to the enolase family. In terms of assembly, homodimer. Mg(2+) serves as cofactor.

It localises to the cytoplasm. It catalyses the reaction (2R)-2-phosphoglycerate = phosphoenolpyruvate + H2O. The protein operates within carbohydrate degradation; glycolysis; pyruvate from D-glyceraldehyde 3-phosphate: step 4/5. Both an enzyme and a lens structural protein. The sequence is that of Alpha-enolase (ENO1) from Anas platyrhynchos (Mallard).